The chain runs to 176 residues: ATP-dependent protease subunit HslV (176 aa).

Thr5 is an active-site residue. The Na(+) site is built by Gly161, Cys164, and Thr167.

The protein belongs to the peptidase T1B family. HslV subfamily. In terms of assembly, a double ring-shaped homohexamer of HslV is capped on each side by a ring-shaped HslU homohexamer. The assembly of the HslU/HslV complex is dependent on binding of ATP.

Its subcellular location is the cytoplasm. It carries out the reaction ATP-dependent cleavage of peptide bonds with broad specificity.. Its activity is regulated as follows. Allosterically activated by HslU binding. Protease subunit of a proteasome-like degradation complex believed to be a general protein degrading machinery. The sequence is that of ATP-dependent protease subunit HslV from Wolinella succinogenes (strain ATCC 29543 / DSM 1740 / CCUG 13145 / JCM 31913 / LMG 7466 / NCTC 11488 / FDC 602W) (Vibrio succinogenes).